The sequence spans 358 residues: Probable tartrate dehydrogenase/decarboxylase TtuC' (358 aa).

Mn(2+)-binding residues include aspartate 222, aspartate 246, and aspartate 250.

It belongs to the isocitrate and isopropylmalate dehydrogenases family. Requires Mg(2+) as cofactor. Mn(2+) serves as cofactor. It depends on K(+) as a cofactor.

It is found in the cytoplasm. It carries out the reaction tartrate + NAD(+) = 2-hydroxy-3-oxosuccinate + NADH + H(+). The enzyme catalyses (2R,3S)-tartrate + NAD(+) = 2-hydroxy-3-oxosuccinate + NADH + H(+). The catalysed reaction is (2R,3R)-tartrate + NAD(+) = 2-hydroxy-3-oxosuccinate + NADH + H(+). It catalyses the reaction (2R,3R)-tartrate + H(+) = (R)-glycerate + CO2. It carries out the reaction (R)-malate + NAD(+) = pyruvate + CO2 + NADH. It functions in the pathway carbohydrate acid metabolism; tartrate degradation; 2-hydroxy-3-oxosuccinate from L-tartrate: step 1/1. It participates in carbohydrate acid metabolism; tartrate degradation; 2-hydroxy-3-oxosuccinate from meso-tartrate: step 1/1. The protein operates within carbohydrate acid metabolism; tartrate degradation; D-glycerate from L-tartrate: step 1/1. Its function is as follows. Has multiple catalytic activities. Apart from catalyzing the oxidation of (+)-tartrate to oxaloglycolate, also converts meso-tartrate to D-glycerate and catalyzes the oxidative decarboxylation of D-malate to pyruvate. The chain is Probable tartrate dehydrogenase/decarboxylase TtuC' (ttuC') from Agrobacterium vitis (Rhizobium vitis).